We begin with the raw amino-acid sequence, 390 residues long: MPPSGLRLLPLLLPLLWLLVLTPGRPAAGLSTCKTIDMELVKRKRIEAIRGQILSKLRLASPPSQGDVPPGPLPEAVLALYNSTRDRVAGESVEPEPEPEADYYAKEVTRVLMVESGNQIYDKFKGTPHSLYMLFNTSELREAVPEPVLLSRAELRLLRLKLKVEQHVELYQKYSNDSWRYLSNRLLAPSDSPEWLSFDVTGVVRQWLTRREAIEGFRLSAHCSCDSKDNTLHVEINGFNSGRRGDLATIHGMNRPFLLLMATPLERAQHLHSSRHRRALDTNYCFSSTEKNCCVRQLYIDFRKDLGWKWIHEPKGYHANFCLGPCPYIWSLDTQYSKVLALYNQHNPGASAAPCCVPQALEPLPIVYYVGRKPKVEQLSNMIVRSCKCS.

The signal sequence occupies residues 1 to 29 (MPPSGLRLLPLLLPLLWLLVLTPGRPAAG). A straightjacket domain region spans residues 30–74 (LSTCKTIDMELVKRKRIEAIRGQILSKLRLASPPSQGDVPPGPLP). An arm domain region spans residues 75–271 (EAVLALYNST…ATPLERAQHL (197 aa)). Residues N82, N136, and N176 are each glycosylated (N-linked (GlcNAc...) asparagine). Residues 226-252 (DSKDNTLHVEINGFNSGRRGDLATIHG) are bowtie tail. The Cell attachment site signature appears at 244–246 (RGD). Cystine bridges form between C285–C294, C293–C356, C322–C387, and C326–C389.

Belongs to the TGF-beta family. As to quaternary structure, homodimer; disulfide-linked. Interacts with the serine proteases, HTRA1 and HTRA3: the interaction with either inhibits TGFB1-mediated signaling and the HTRA protease activity is required for this inhibition. May interact with THSD4; this interaction may lead to sequestration by FBN1 microfibril assembly and attenuation of TGFB signaling. Interacts with CD109, DPT and ASPN. Interacts with EFEMP2. Interacts with TSKU; the interaction contributes to regulation of the hair cycle. Interacts with TGFBR3. Homodimer; disulfide-linked. Interacts with transforming growth factor beta-1 (TGF-beta-1) chain; interaction is non-covalent and maintains TGF-beta-1 in a latent state; each latency-associated peptide (LAP) monomer interacts with TGF-beta-1 in the other monomer. Interacts with LTBP1; leading to regulation of TGF-beta-1 activation. Interacts with LRRC32/GARP; leading to regulation of TGF-beta-1 activation on the surface of activated regulatory T-cells (Tregs). Interacts with LRRC33/NRROS; leading to regulation of TGF-beta-1 activation in macrophages and microglia. Interacts (via cell attachment site) with integrins ITGAV and ITGB6 (ITGAV:ITGB6), leading to release of the active TGF-beta-1. Interacts with NREP; the interaction results in a decrease in TGFB1 autoinduction. Interacts with HSP90AB1; inhibits latent TGFB1 activation. In terms of assembly, homodimer; disulfide-linked. Interacts with TGF-beta receptors (TGFBR1 and TGFBR2), leading to signal transduction. Post-translationally, transforming growth factor beta-1 proprotein: The precursor proprotein is cleaved in the Golgi apparatus by FURIN to form Transforming growth factor beta-1 (TGF-beta-1) and Latency-associated peptide (LAP) chains, which remain non-covalently linked, rendering TGF-beta-1 inactive. N-glycosylated. Deglycosylation leads to activation of Transforming growth factor beta-1 (TGF-beta-1); mechanisms triggering deglycosylation-driven activation of TGF-beta-1 are however unclear.

The protein resides in the secreted. Its subcellular location is the extracellular space. It is found in the extracellular matrix. Functionally, transforming growth factor beta-1 proprotein: Precursor of the Latency-associated peptide (LAP) and Transforming growth factor beta-1 (TGF-beta-1) chains, which constitute the regulatory and active subunit of TGF-beta-1, respectively. Required to maintain the Transforming growth factor beta-1 (TGF-beta-1) chain in a latent state during storage in extracellular matrix. Associates non-covalently with TGF-beta-1 and regulates its activation via interaction with 'milieu molecules', such as LTBP1, LRRC32/GARP and LRRC33/NRROS, that control activation of TGF-beta-1. Interaction with LRRC33/NRROS regulates activation of TGF-beta-1 in macrophages and microglia. Interaction with LRRC32/GARP controls activation of TGF-beta-1 on the surface of activated regulatory T-cells (Tregs). Interaction with integrins (ITGAV:ITGB6 or ITGAV:ITGB8) results in distortion of the Latency-associated peptide chain and subsequent release of the active TGF-beta-1. In terms of biological role, multifunctional protein that regulates the growth and differentiation of various cell types and is involved in various processes, such as normal development, immune function, microglia function and responses to neurodegeneration. Activation into mature form follows different steps: following cleavage of the proprotein in the Golgi apparatus, Latency-associated peptide (LAP) and Transforming growth factor beta-1 (TGF-beta-1) chains remain non-covalently linked rendering TGF-beta-1 inactive during storage in extracellular matrix. At the same time, LAP chain interacts with 'milieu molecules', such as LTBP1, LRRC32/GARP and LRRC33/NRROS that control activation of TGF-beta-1 and maintain it in a latent state during storage in extracellular milieus. TGF-beta-1 is released from LAP by integrins (ITGAV:ITGB6 or ITGAV:ITGB8): integrin-binding to LAP stabilizes an alternative conformation of the LAP bowtie tail and results in distortion of the LAP chain and subsequent release of the active TGF-beta-1. Once activated following release of LAP, TGF-beta-1 acts by binding to TGF-beta receptors (TGFBR1 and TGFBR2), which transduce signal. While expressed by many cells types, TGF-beta-1 only has a very localized range of action within cell environment thanks to fine regulation of its activation by Latency-associated peptide chain (LAP) and 'milieu molecules'. Plays an important role in bone remodeling: acts as a potent stimulator of osteoblastic bone formation, causing chemotaxis, proliferation and differentiation in committed osteoblasts. Can promote either T-helper 17 cells (Th17) or regulatory T-cells (Treg) lineage differentiation in a concentration-dependent manner. At high concentrations, leads to FOXP3-mediated suppression of RORC and down-regulation of IL-17 expression, favoring Treg cell development. At low concentrations in concert with IL-6 and IL-21, leads to expression of the IL-17 and IL-23 receptors, favoring differentiation to Th17 cells. Stimulates sustained production of collagen through the activation of CREB3L1 by regulated intramembrane proteolysis (RIP). Mediates SMAD2/3 activation by inducing its phosphorylation and subsequent translocation to the nucleus. Positively regulates odontoblastic differentiation in dental papilla cells, via promotion of IPO7-mediated translocation of phosphorylated SMAD2 to the nucleus and subsequent transcription of target genes. Can induce epithelial-to-mesenchymal transition (EMT) and cell migration in various cell types. The protein is Transforming growth factor beta-1 proprotein (TGFB1) of Sus scrofa (Pig).